We begin with the raw amino-acid sequence, 217 residues long: MSLATIAENYMMHNGNQRAIVPYVPPPYAYANAPTLGGQAGEMESMSLGILNQAMSSTTGASRALKDEKAAFGAMAEALRDPEPIRQIKKHVGLRTLKHLKIELASMRRRYAILRVVIFMSGCVTMATSMAGGLTIIDNEIYEDLSGDGWLSKTIHGLNLLCTTMLLAAGKISDKIQEEISRTKRDIAKRESYVSAASMSWSGDTSVLLKEVKYGDS.

It belongs to the orbivirus NS3 family.

Functionally, may play a role in the release of virions from infected cells. In African horse sickness virus (AHSV), this protein is Non-structural protein NS3 (Segment-10).